The following is a 431-amino-acid chain: Nuclear receptor subfamily 1 group I member 2 (431 aa).

2 consecutive NR C4-type zinc fingers follow at residues 38–58 and 74–99; these read CRVC…CEGC and CPFR…LRKC. Positions 38 to 104 form a DNA-binding region, nuclear receptor; that stretch reads CRVCGDKANG…RLRKCLESGM (67 aa). The short motif at 63–89 is the Bipartite nuclear localization signal element; the sequence is RRAMKRNVRLRCPFRKGTCEITRKTRR. Residues 105 to 142 are hinge; that stretch reads KKEMIMSDAAVEQRRALIKRKKREKIEAPPPGGQGLTE. The 288-residue stretch at 143 to 430 folds into the NR LBD domain; the sequence is EQQALIQELM…LMQELFSSTD (288 aa). Residues S244 and 282–285 contribute to the hyperforin site; that span reads ILRF.

This sequence belongs to the nuclear hormone receptor family. NR1 subfamily. Heterodimer with RXRA. Interacts with NCOA1. Interacts (via domain NR LBD) with CRY1 and CRY2 in a ligand-dependent manner.

Its subcellular location is the nucleus. In terms of biological role, nuclear receptor that binds and is activated by a variety of endogenous and xenobiotic compounds. Transcription factor that activates the transcription of multiple genes involved in the metabolism and secretion of potentially harmful xenobiotics, endogenous compounds and drugs. Response to specific ligands is species-specific, due to differences in the ligand-binding domain. Activated by naturally occurring steroids, such as pregnenolone and progesterone. Binds to a response element in the promoters of the CYP3A4 and ABCB1/MDR1 genes. This chain is Nuclear receptor subfamily 1 group I member 2 (Nr1i2), found in Rattus norvegicus (Rat).